Here is a 458-residue protein sequence, read N- to C-terminus: Bifunctional protein GlmU (458 aa).

The segment at 1–230 is pyrophosphorylase; sequence MLQVDVVILA…DWEVSGVNDK (230 aa). UDP-N-acetyl-alpha-D-glucosamine is bound by residues 9-12, Lys23, Gln75, and 80-81; these read LAAG and GT. Asp104 is a Mg(2+) binding site. Residues Gly139, Glu155, Asn170, and Asn228 each contribute to the UDP-N-acetyl-alpha-D-glucosamine site. A Mg(2+)-binding site is contributed by Asn228. A linker region spans residues 231–251; sequence IQLSILERAHQQDTANRLMEQ. The segment at 252–458 is N-acetyltransferase; that stretch reads GVMFADPARF…NWKRPRKDRN (207 aa). Residues Arg334 and Lys352 each contribute to the UDP-N-acetyl-alpha-D-glucosamine site. His364 functions as the Proton acceptor in the catalytic mechanism. Residues Tyr367 and Asn378 each contribute to the UDP-N-acetyl-alpha-D-glucosamine site. Residues Ala381, 387 to 388, Ser406, Ala424, and Arg441 each bind acetyl-CoA; that span reads NY.

The protein in the N-terminal section; belongs to the N-acetylglucosamine-1-phosphate uridyltransferase family. It in the C-terminal section; belongs to the transferase hexapeptide repeat family. In terms of assembly, homotrimer. Mg(2+) is required as a cofactor.

The protein localises to the cytoplasm. It catalyses the reaction alpha-D-glucosamine 1-phosphate + acetyl-CoA = N-acetyl-alpha-D-glucosamine 1-phosphate + CoA + H(+). The enzyme catalyses N-acetyl-alpha-D-glucosamine 1-phosphate + UTP + H(+) = UDP-N-acetyl-alpha-D-glucosamine + diphosphate. It participates in nucleotide-sugar biosynthesis; UDP-N-acetyl-alpha-D-glucosamine biosynthesis; N-acetyl-alpha-D-glucosamine 1-phosphate from alpha-D-glucosamine 6-phosphate (route II): step 2/2. Its pathway is nucleotide-sugar biosynthesis; UDP-N-acetyl-alpha-D-glucosamine biosynthesis; UDP-N-acetyl-alpha-D-glucosamine from N-acetyl-alpha-D-glucosamine 1-phosphate: step 1/1. It functions in the pathway bacterial outer membrane biogenesis; LPS lipid A biosynthesis. Catalyzes the last two sequential reactions in the de novo biosynthetic pathway for UDP-N-acetylglucosamine (UDP-GlcNAc). The C-terminal domain catalyzes the transfer of acetyl group from acetyl coenzyme A to glucosamine-1-phosphate (GlcN-1-P) to produce N-acetylglucosamine-1-phosphate (GlcNAc-1-P), which is converted into UDP-GlcNAc by the transfer of uridine 5-monophosphate (from uridine 5-triphosphate), a reaction catalyzed by the N-terminal domain. In Nitrosomonas europaea (strain ATCC 19718 / CIP 103999 / KCTC 2705 / NBRC 14298), this protein is Bifunctional protein GlmU.